The following is a 327-amino-acid chain: E3 ubiquitin-protein ligase ZNRF4 (327 aa).

Positions 1 to 28 are cleaved as a signal peptide; sequence MARFAWTRVAPVALVTFWLVLSLSPTDA. The Lumenal portion of the chain corresponds to 29 to 150; sequence QVNLSSVDFL…EPCPDPECHP (122 aa). An N-linked (GlcNAc...) asparagine glycan is attached at N31. A helical membrane pass occupies residues 151–171; sequence VVVASWALARALALAASTLFV. Residues 172–327 lie on the Cytoplasmic side of the membrane; that stretch reads LRQLWPWVRG…AQSEATSELS (156 aa). Residues 209-252 form an RING-type; atypical zinc finger; sequence CAICLDDYEEGERLKILPCAHAYHCRCIDPWFSRAAQRSCPLCK. A compositionally biased stretch (polar residues) spans 256-265; it reads ASTHDGSTDG. Residues 256-279 are disordered; the sequence is ASTHDGSTDGSVGGEEPPLPGHRP.

As to quaternary structure, interacts with CANX. In terms of tissue distribution, expressed exclusively in spermatids (at protein level).

The protein resides in the endoplasmic reticulum membrane. The catalysed reaction is S-ubiquitinyl-[E2 ubiquitin-conjugating enzyme]-L-cysteine + [acceptor protein]-L-lysine = [E2 ubiquitin-conjugating enzyme]-L-cysteine + N(6)-ubiquitinyl-[acceptor protein]-L-lysine.. It functions in the pathway protein modification; protein ubiquitination. Functionally, E3 ubiquitin-protein ligase that acts as a negative regulator of NOD2 signaling by mediating ubiquitination and degradation of RIPK2. Also catalyzes ubiquitination and proteasomal degradation of CANX within the endoplasmic reticulum. Could have a role in spermatogenesis. The chain is E3 ubiquitin-protein ligase ZNRF4 from Mus musculus (Mouse).